A 288-amino-acid chain; its full sequence is Probable ketoamine kinase SAOUHSC_02908 (288 aa).

Position 86–88 (86–88) interacts with ATP; sequence TYL. The active-site Proton acceptor is aspartate 191.

The protein belongs to the fructosamine kinase family.

It catalyses the reaction N(6)-(D-ribulosyl)-L-lysine + ATP = N(6)-(3-O-phospho-D-ribulosyl)-L-lysine + ADP + H(+). The catalysed reaction is N(6)-(D-erythrulosyl)-L-lysine + ATP = N(6)-(3-O-phospho-D-erythrulosyl)-L-lysine + ADP + H(+). It carries out the reaction N(6)-D-ribulosyl-L-lysyl-[protein] + ATP = N(6)-(3-O-phospho-D-ribulosyl)-L-lysyl-[protein] + ADP + H(+). The enzyme catalyses N(6)-(D-erythrulosyl)-L-lysyl-[protein] + ATP = N(6)-(3-O-phospho-D-erythrulosyl)-L-lysyl-[protein] + ADP + H(+). Ketoamine kinase that phosphorylates ketoamines, such as erythruloselysine and ribuloselysine, on the third carbon of the sugar moiety to generate ketoamine 3-phosphate. Has higher activity on free lysine (erythruloselysine and ribuloselysine), than on ribuloselysine and erythruloselysine residues on glycated proteins. In Staphylococcus aureus (strain NCTC 8325 / PS 47), this protein is Probable ketoamine kinase SAOUHSC_02908.